We begin with the raw amino-acid sequence, 379 residues long: NADH-quinone oxidoreductase subunit D 2 (379 aa).

It belongs to the complex I 49 kDa subunit family. In terms of assembly, NDH-1 is composed of 14 different subunits. Subunits NuoB, C, D, E, F, and G constitute the peripheral sector of the complex.

It localises to the cell inner membrane. It carries out the reaction a quinone + NADH + 5 H(+)(in) = a quinol + NAD(+) + 4 H(+)(out). In terms of biological role, NDH-1 shuttles electrons from NADH, via FMN and iron-sulfur (Fe-S) centers, to quinones in the respiratory chain. The immediate electron acceptor for the enzyme in this species is believed to be ubiquinone. Couples the redox reaction to proton translocation (for every two electrons transferred, four hydrogen ions are translocated across the cytoplasmic membrane), and thus conserves the redox energy in a proton gradient. This is NADH-quinone oxidoreductase subunit D 2 from Anaeromyxobacter dehalogenans (strain 2CP-C).